Reading from the N-terminus, the 497-residue chain is Cytochrome P450 2D6 (497 aa).

Substrate is bound at residue Asp-301. Cys-443 contributes to the heme binding site.

The protein belongs to the cytochrome P450 family. Heme serves as cofactor.

Its subcellular location is the endoplasmic reticulum membrane. The protein localises to the microsome membrane. The enzyme catalyses (5Z,8Z,11Z,14Z)-eicosatetraenoate + reduced [NADPH--hemoprotein reductase] + O2 = (8R,9S)-epoxy-(5Z,11Z,14Z)-eicosatrienoate + oxidized [NADPH--hemoprotein reductase] + H2O + H(+). It catalyses the reaction (5Z,8Z,11Z,14Z)-eicosatetraenoate + reduced [NADPH--hemoprotein reductase] + O2 = (11R,12S)-epoxy-(5Z,8Z,14Z)-eicosatrienoate + oxidized [NADPH--hemoprotein reductase] + H2O + H(+). The catalysed reaction is (5Z,8Z,11Z,14Z)-eicosatetraenoate + reduced [NADPH--hemoprotein reductase] + O2 = (14S,15R)-epoxy-(5Z,8Z,11Z)-eicosatrienoate + oxidized [NADPH--hemoprotein reductase] + H2O + H(+). It carries out the reaction N-(5Z,8Z,11Z,14Z-eicosatetraenoyl)-ethanolamine + reduced [NADPH--hemoprotein reductase] + O2 = N-(8,9-epoxy-5Z,11Z,14Z-eicosatrienoyl)-ethanolamine + oxidized [NADPH--hemoprotein reductase] + H2O + H(+). The enzyme catalyses N-(5Z,8Z,11Z,14Z-eicosatetraenoyl)-ethanolamine + reduced [NADPH--hemoprotein reductase] + O2 = N-(11,12-epoxy-5Z,8Z,14Z-eicosatrienoyl)-ethanolamine + oxidized [NADPH--hemoprotein reductase] + H2O + H(+). It catalyses the reaction N-(5Z,8Z,11Z,14Z-eicosatetraenoyl)-ethanolamine + reduced [NADPH--hemoprotein reductase] + O2 = N-(14,15-epoxy-5Z,8Z,11Z-eicosatrienoyl)-ethanolamine + oxidized [NADPH--hemoprotein reductase] + H2O + H(+). The catalysed reaction is N-(5Z,8Z,11Z,14Z-eicosatetraenoyl)-ethanolamine + reduced [NADPH--hemoprotein reductase] + O2 = N-(20-hydroxy-5Z,8Z,11Z,14Z-eicosatetraenoyl)-ethanolamine + oxidized [NADPH--hemoprotein reductase] + H2O + H(+). It carries out the reaction (5Z,8Z,11Z,14Z,17Z)-eicosapentaenoate + reduced [NADPH--hemoprotein reductase] + O2 = (17S,18R)-epoxy-(5Z,8Z,11Z,14Z)-eicosatetraenoate + oxidized [NADPH--hemoprotein reductase] + H2O + H(+). The enzyme catalyses (4Z,7Z,10Z,13Z,16Z,19Z)-docosahexaenoate + reduced [NADPH--hemoprotein reductase] + O2 = (19R,20S)-epoxy-(4Z,7Z,10Z,13Z,16Z)-docosapentaenoate + oxidized [NADPH--hemoprotein reductase] + H2O + H(+). It catalyses the reaction (4Z,7Z,10Z,13Z,16Z,19Z)-docosahexaenoate + reduced [NADPH--hemoprotein reductase] + O2 = (19S,20R)-epoxy-(4Z,7Z,10Z,13Z,16Z)-docosapentaenoate + oxidized [NADPH--hemoprotein reductase] + H2O + H(+). The catalysed reaction is cholesterol + reduced [NADPH--hemoprotein reductase] + O2 = 25-hydroxycholesterol + oxidized [NADPH--hemoprotein reductase] + H2O + H(+). It carries out the reaction all-trans-retinol + reduced [NADPH--hemoprotein reductase] + O2 = all-trans-retinal + oxidized [NADPH--hemoprotein reductase] + 2 H2O + H(+). The protein operates within cofactor metabolism; retinol metabolism. It participates in lipid metabolism; fatty acid metabolism. It functions in the pathway steroid metabolism; cholesterol metabolism. Its function is as follows. A cytochrome P450 monooxygenase involved in the metabolism of fatty acids, steroids and retinoids. Mechanistically, uses molecular oxygen inserting one oxygen atom into a substrate, and reducing the second into a water molecule, with two electrons provided by NADPH via cytochrome P450 reductase (NADPH--hemoprotein reductase). Catalyzes the epoxidation of double bonds of polyunsaturated fatty acids (PUFA). Metabolizes endocannabinoid arachidonoylethanolamide (anandamide) to 20-hydroxyeicosatetraenoic acid ethanolamide (20-HETE-EA) and 8,9-, 11,12-, and 14,15-epoxyeicosatrienoic acid ethanolamides (EpETrE-EAs), potentially modulating endocannabinoid system signaling. Catalyzes the hydroxylation of carbon-hydrogen bonds. Metabolizes cholesterol toward 25-hydroxycholesterol, a physiological regulator of cellular cholesterol homeostasis. Catalyzes the oxidative transformations of all-trans retinol to all-trans retinal, a precursor for the active form all-trans-retinoic acid. Also involved in the oxidative metabolism of drugs such as antiarrhythmics, adrenoceptor antagonists, and tricyclic antidepressants. The protein is Cytochrome P450 2D6 of Homo sapiens (Human).